A 153-amino-acid chain; its full sequence is Natriuretic peptides A (153 aa).

The first 25 residues, 1–25, serve as a signal peptide directing secretion; it reads MGPFSTITVSFLFCLAFWHPDQIGA. 2 propeptides span residues 26–123 and 93–103; these read NPVY…TAPR and DGEALGRSTWE. A disordered region spans residues 54–101; sequence EDEAVPPQALSEQSDEAGAALSPLPEVPPWTGEVSPAQRDGEALGRST. At serine 129 the chain carries Phosphoserine. Cysteine 130 and cysteine 146 are disulfide-bonded. An important for degradation of atrial natriuretic peptide by IDE region spans residues 147–151; it reads NSFRY.

Belongs to the natriuretic peptide family. In terms of assembly, homodimer; disulfide-linked antiparallel dimer. In terms of processing, the precursor molecule is proteolytically cleaved by CORIN at Arg-123 to produce the atrial natriuretic peptide. Undergoes further proteolytic cleavage by unknown proteases to give rise to long-acting natriuretic peptide, vessel dilator and kaliuretic peptide. Additional processing gives rise to the auriculin and atriopeptin peptides. In the kidneys, alternative processing by an unknown protease results in the peptide urodilatin. Post-translationally, cleavage by MME initiates degradation of the factor and thereby regulates its activity. Degradation by IDE results in reduced activation of NPR1 (in vitro). During IDE degradation, the resulting products can temporarily stimulate NPR2 to produce cGMP, before the fragments are completely degraded and inactivated by IDE (in vitro). Degraded by IDE. In terms of processing, phosphorylation on Ser-129 decreases vasorelaxant activity.

The protein resides in the secreted. It is found in the perikaryon. Its subcellular location is the cell projection. In terms of biological role, hormone that plays a key role in mediating cardio-renal homeostasis, and is involved in vascular remodeling and regulating energy metabolism. Acts by specifically binding and stimulating NPR1 to produce cGMP, which in turn activates effector proteins, such as PRKG1, that drive various biological responses. Regulates vasodilation, natriuresis, diuresis and aldosterone synthesis and is therefore essential for regulating blood pressure, controlling the extracellular fluid volume and maintaining the fluid-electrolyte balance. Also involved in inhibiting cardiac remodeling and cardiac hypertrophy by inducing cardiomyocyte apoptosis and attenuating the growth of cardiomyocytes and fibroblasts. Plays a role in female pregnancy by promoting trophoblast invasion and spiral artery remodeling in uterus, and thus prevents pregnancy-induced hypertension. In adipose tissue, acts in various cGMP- and PKG-dependent pathways to regulate lipid metabolism and energy homeostasis. This includes up-regulating lipid metabolism and mitochondrial oxygen utilization by activating the AMP-activated protein kinase (AMPK), and increasing energy expenditure by acting via MAPK11 to promote the UCP1-dependent thermogenesis of brown adipose tissue. Binds the clearance receptor NPR3 which removes the hormone from circulation. Its function is as follows. May have a role in cardio-renal homeostasis through regulation of natriuresis, diuresis, vasodilation, and inhibiting aldosterone synthesis. In vitro, promotes the production of cGMP and induces vasodilation. May promote natriuresis, at least in part, by enhancing prostaglandin E2 synthesis resulting in the inhibition of renal Na+-K+-ATPase. However reports on the involvement of this peptide in mammal blood volume and blood pressure homeostasis are conflicting; according to a report, in vivo it is not sufficient to activate cGMP and does not inhibit collecting duct transport nor effect diuresis and natriuresis. Appears to bind to specific receptors that are distinct from the receptors bound by atrial natriuretic peptide and vessel dilator. Possibly enhances protein excretion in urine by decreasing proximal tubular protein reabsorption. Functionally, may have a role in cardio-renal homeostasis through regulation of natriuresis, diuresis, and vasodilation. In vitro, promotes the production of cGMP and induces vasodilation. May promote natriuresis, at least in part, by enhancing prostaglandin E2 synthesis resulting in the inhibition of renal Na+-K+-ATPase. However reports on the involvement of this peptide in mammal blood volume and blood pressure homeostasis are conflicting; according to a report it is not sufficient to activate cGMP and does not inhibit collecting duct transport nor effect diuresis and natriuresis. Appears to bind to specific receptors that are distinct from the receptors bound by the atrial natriuretic and long-acting natriuretic peptides. Possibly functions in protein excretion in urine by maintaining the integrity of the proximal tubules and enhancing protein excretion by decreasing proximal tubular protein reabsorption. May have a role in cardio-renal homeostasis through regulation of diuresis and inhibiting aldosterone synthesis. In vitro, promotes the production of cGMP and induces vasodilation. May promote natriuresis, at least in part, by enhancing prostaglandin E2 synthesis resulting in the inhibition of renal Na+-K+-ATPase. May have a role in potassium excretion but not sodium excretion (natriuresis). Possibly enhances protein excretion in urine by decreasing proximal tubular protein reabsorption. In terms of biological role, hormone produced in the kidneys that appears to be important for maintaining cardio-renal homeostasis. Mediates vasodilation, natriuresis and diuresis primarily in the renal system, in order to maintain the extracellular fluid volume and control the fluid-electrolyte balance. Specifically binds and stimulates cGMP production by renal transmembrane receptors, likely NPR1. Urodilatin not ANP, may be the natriuretic peptide responsible for the regulation of sodium and water homeostasis in the kidney. Its function is as follows. May have a role in cardio-renal homeostasis through regulation of natriuresis and vasodilation. In vivo promotes natriuresis and in vitro, vasodilates renal artery strips. Functionally, may have a role in cardio-renal homeostasis through regulation of regulation of natriuresis and vasodilation. In vivo promotes natriuresis. In vitro, vasodilates intestinal smooth muscle but not smooth muscle strips. May have a role in cardio-renal homeostasis through regulation of natriuresis and vasodilation. In vivo promotes natriuresis. In vitro, selectively vasodilates intestinal and vascular smooth muscle strips. In terms of biological role, may have a role in cardio-renal homeostasis through regulation of natriuresis and vasodilation. In vivo promotes natriuresis. In vitro, selectively vasodilates intestinal smooth muscle but not vascular smooth muscle strips. The polypeptide is Natriuretic peptides A (NPPA) (Oryctolagus cuniculus (Rabbit)).